Reading from the N-terminus, the 397-residue chain is UPF0761 membrane protein Kkor_1635 (397 aa).

Transmembrane regions (helical) follow at residues 36 to 56, 92 to 112, 132 to 152, 168 to 188, 201 to 221, and 237 to 257; these read MLAL…FPSF, NLSA…MRSI, ILAY…SLAA, ILTF…LYMV, IAAV…AIFV, and IPIF…GVIV.

This sequence belongs to the UPF0761 family.

Its subcellular location is the cell inner membrane. This chain is UPF0761 membrane protein Kkor_1635, found in Kangiella koreensis (strain DSM 16069 / JCM 12317 / KCTC 12182 / SW-125).